The following is a 202-amino-acid chain: Cytochrome c biogenesis ATP-binding export protein CcmA (202 aa).

The ABC transporter domain maps to 3–200 (LAAENLSGER…EGTQELKMGA (198 aa)). Position 35–42 (35–42 (GPNGAGKS)) interacts with ATP.

The protein belongs to the ABC transporter superfamily. CcmA exporter (TC 3.A.1.107) family. As to quaternary structure, the complex is composed of two ATP-binding proteins (CcmA) and two transmembrane proteins (CcmB).

It localises to the cell inner membrane. It carries out the reaction heme b(in) + ATP + H2O = heme b(out) + ADP + phosphate + H(+). Part of the ABC transporter complex CcmAB involved in the biogenesis of c-type cytochromes; once thought to export heme, this seems not to be the case, but its exact role is uncertain. Responsible for energy coupling to the transport system. The sequence is that of Cytochrome c biogenesis ATP-binding export protein CcmA from Chelativorans sp. (strain BNC1).